A 275-amino-acid polypeptide reads, in one-letter code: Probable endonuclease lcl3 (275 aa).

A disordered region spans residues 1–25 (MRWPPWASNTQASNNDHPTTTNNND). Residues 14–25 (NNDHPTTTNNND) show a composition bias toward low complexity. Residues 41-57 (LIPTLVLTTGILSAFTL) form a helical membrane-spanning segment. The 169-residue stretch at 79–247 (RSILGKVTSV…KARGLGLWKG (169 aa)) folds into the TNase-like domain. Residue R130 is part of the active site. D135 lines the Ca(2+) pocket. Active-site residues include E138 and R178.

Belongs to the LCL3 family.

It is found in the mitochondrion. It localises to the membrane. The sequence is that of Probable endonuclease lcl3 (lcl3) from Aspergillus niger (strain ATCC MYA-4892 / CBS 513.88 / FGSC A1513).